Consider the following 141-residue polypeptide: Large ribosomal subunit protein uL11 (141 aa).

The protein belongs to the universal ribosomal protein uL11 family. Part of the ribosomal stalk of the 50S ribosomal subunit. Interacts with L10 and the large rRNA to form the base of the stalk. L10 forms an elongated spine to which L12 dimers bind in a sequential fashion forming a multimeric L10(L12)X complex. In terms of processing, one or more lysine residues are methylated.

Its function is as follows. Forms part of the ribosomal stalk which helps the ribosome interact with GTP-bound translation factors. This chain is Large ribosomal subunit protein uL11, found in Oceanobacillus iheyensis (strain DSM 14371 / CIP 107618 / JCM 11309 / KCTC 3954 / HTE831).